Here is a 340-residue protein sequence, read N- to C-terminus: DNA-directed RNA polymerase subunit alpha (340 aa).

The segment at 1–236 (MLSLSKNWNT…EQLQLFISFE (236 aa)) is alpha N-terminal domain (alpha-NTD). The interval 251-340 (FSPYLLKRVD…LSKRYEDSYN (90 aa)) is alpha C-terminal domain (alpha-CTD).

This sequence belongs to the RNA polymerase alpha chain family. In terms of assembly, homodimer. The RNAP catalytic core consists of 2 alpha, 1 beta, 1 beta' and 1 omega subunit. When a sigma factor is associated with the core the holoenzyme is formed, which can initiate transcription.

The catalysed reaction is RNA(n) + a ribonucleoside 5'-triphosphate = RNA(n+1) + diphosphate. DNA-dependent RNA polymerase catalyzes the transcription of DNA into RNA using the four ribonucleoside triphosphates as substrates. In Rickettsia africae (strain ESF-5), this protein is DNA-directed RNA polymerase subunit alpha.